Consider the following 386-residue polypeptide: Succinate--CoA ligase [ADP-forming] subunit beta (386 aa).

Positions 9–244 constitute an ATP-grasp domain; it reads KEILRSYGVS…LDEEDPKEVE (236 aa). ATP-binding positions include lysine 46, 53-55, glutamate 99, cysteine 102, and glutamate 107; that span reads GRG. Residues asparagine 199 and aspartate 213 each contribute to the Mg(2+) site. Residues asparagine 264 and 321–323 contribute to the substrate site; that span reads GIM.

It belongs to the succinate/malate CoA ligase beta subunit family. As to quaternary structure, heterotetramer of two alpha and two beta subunits. It depends on Mg(2+) as a cofactor.

It carries out the reaction succinate + ATP + CoA = succinyl-CoA + ADP + phosphate. The catalysed reaction is GTP + succinate + CoA = succinyl-CoA + GDP + phosphate. Its pathway is carbohydrate metabolism; tricarboxylic acid cycle; succinate from succinyl-CoA (ligase route): step 1/1. In terms of biological role, succinyl-CoA synthetase functions in the citric acid cycle (TCA), coupling the hydrolysis of succinyl-CoA to the synthesis of either ATP or GTP and thus represents the only step of substrate-level phosphorylation in the TCA. The beta subunit provides nucleotide specificity of the enzyme and binds the substrate succinate, while the binding sites for coenzyme A and phosphate are found in the alpha subunit. The polypeptide is Succinate--CoA ligase [ADP-forming] subunit beta (Geobacillus thermodenitrificans (strain NG80-2)).